The chain runs to 324 residues: Ribosomal large subunit pseudouridine synthase D (324 aa).

The region spanning 18–91 (QRLDQAVAEL…LPLNIVYEDD (74 aa)) is the S4 RNA-binding domain. The active site involves aspartate 139.

Belongs to the pseudouridine synthase RluA family.

Its subcellular location is the cytoplasm. It catalyses the reaction uridine(1911/1915/1917) in 23S rRNA = pseudouridine(1911/1915/1917) in 23S rRNA. Functionally, responsible for synthesis of pseudouridine from uracil at positions 1911, 1915 and 1917 in 23S ribosomal RNA. The polypeptide is Ribosomal large subunit pseudouridine synthase D (rluD) (Vibrio cholerae serotype O1 (strain ATCC 39315 / El Tor Inaba N16961)).